Here is a 107-residue protein sequence, read N- to C-terminus: Small ribosomal subunit protein uS17 (107 aa).

It belongs to the universal ribosomal protein uS17 family. As to quaternary structure, part of the 30S ribosomal subunit.

One of the primary rRNA binding proteins, it binds specifically to the 5'-end of 16S ribosomal RNA. The sequence is that of Small ribosomal subunit protein uS17 from Thermotoga sp. (strain RQ2).